The sequence spans 249 residues: Enolase-phosphatase E1 (249 aa).

Positions 9 and 11 each coordinate Mg(2+). Residues 137-138 (SS) and Lys-177 contribute to the substrate site. Asp-204 contributes to the Mg(2+) binding site.

The protein belongs to the HAD-like hydrolase superfamily. MasA/MtnC family. As to quaternary structure, monomer. The cofactor is Mg(2+).

It localises to the cytoplasm. The protein resides in the nucleus. The catalysed reaction is 5-methylsulfanyl-2,3-dioxopentyl phosphate + H2O = 1,2-dihydroxy-5-(methylsulfanyl)pent-1-en-3-one + phosphate. It functions in the pathway amino-acid biosynthesis; L-methionine biosynthesis via salvage pathway; L-methionine from S-methyl-5-thio-alpha-D-ribose 1-phosphate: step 3/6. It participates in amino-acid biosynthesis; L-methionine biosynthesis via salvage pathway; L-methionine from S-methyl-5-thio-alpha-D-ribose 1-phosphate: step 4/6. Bifunctional enzyme that catalyzes the enolization of 2,3-diketo-5-methylthiopentyl-1-phosphate (DK-MTP-1-P) into the intermediate 2-hydroxy-3-keto-5-methylthiopentenyl-1-phosphate (HK-MTPenyl-1-P), which is then dephosphorylated to form the acireductone 1,2-dihydroxy-3-keto-5-methylthiopentene (DHK-MTPene). The sequence is that of Enolase-phosphatase E1 from Lodderomyces elongisporus (strain ATCC 11503 / CBS 2605 / JCM 1781 / NBRC 1676 / NRRL YB-4239) (Yeast).